The primary structure comprises 180 residues: Large ribosomal subunit protein uL5 (180 aa).

Belongs to the universal ribosomal protein uL5 family. In terms of assembly, part of the 50S ribosomal subunit; part of the 5S rRNA/L5/L18/L25 subcomplex. Contacts the 5S rRNA and the P site tRNA. Forms a bridge to the 30S subunit in the 70S ribosome.

In terms of biological role, this is one of the proteins that bind and probably mediate the attachment of the 5S RNA into the large ribosomal subunit, where it forms part of the central protuberance. In the 70S ribosome it contacts protein S13 of the 30S subunit (bridge B1b), connecting the 2 subunits; this bridge is implicated in subunit movement. Contacts the P site tRNA; the 5S rRNA and some of its associated proteins might help stabilize positioning of ribosome-bound tRNAs. The polypeptide is Large ribosomal subunit protein uL5 (Acholeplasma laidlawii (strain PG-8A)).